We begin with the raw amino-acid sequence, 666 residues long: Zinc finger protein 710 (666 aa).

Glycyl lysine isopeptide (Lys-Gly) (interchain with G-Cter in SUMO2) cross-links involve residues lysine 110 and lysine 113. Residues 113–141 are disordered; the sequence is KAEEEEEQEVYEVSVPGDDKDPGPAEAPA. 3 C2H2-type zinc fingers span residues 297–319, 325–347, and 353–375; these read WQCR…ILGH, HSCP…LLTH, and HKCQ…MLLH. A Glycyl lysine isopeptide (Lys-Gly) (interchain with G-Cter in SUMO2) cross-link involves residue lysine 379. 8 consecutive C2H2-type zinc fingers follow at residues 381–403, 409–431, 437–459, 465–487, 493–515, 521–543, 549–571, and 577–600; these read YSCH…EVKH, HVCV…LASH, YQCL…MLKH, FVCT…SLTH, FKCE…MLIH, YQCH…MIVH, FKCK…MHLH, and FKCP…KVKH.

The protein belongs to the krueppel C2H2-type zinc-finger protein family.

The protein localises to the nucleus. Its function is as follows. May be involved in transcriptional regulation. In Mus musculus (Mouse), this protein is Zinc finger protein 710 (Znf710).